We begin with the raw amino-acid sequence, 69 residues long: Large ribosomal subunit protein bL28 (69 aa).

Belongs to the bacterial ribosomal protein bL28 family.

The protein is Large ribosomal subunit protein bL28 of Nitratidesulfovibrio vulgaris (strain ATCC 29579 / DSM 644 / CCUG 34227 / NCIMB 8303 / VKM B-1760 / Hildenborough) (Desulfovibrio vulgaris).